Consider the following 122-residue polypeptide: Large ribosomal subunit protein uL14c (122 aa).

This sequence belongs to the universal ribosomal protein uL14 family. Part of the 50S ribosomal subunit.

The protein localises to the plastid. The protein resides in the chloroplast. Functionally, binds to 23S rRNA. The chain is Large ribosomal subunit protein uL14c from Lotus japonicus (Lotus corniculatus var. japonicus).